The chain runs to 705 residues: Putative membrane protein SCO0839 (705 aa).

12 consecutive transmembrane segments (helical) span residues 16–36 (WLVP…LGPY), 177–197 (GIDG…LLLV), 202–222 (LLPL…CAIV), 237–257 (VQGI…LLLT), 281–301 (SWGA…ALLL), 316–336 (IGIV…LVLL), 373–393 (IWAL…TLSS), 529–549 (LIVP…LRSL), 554–574 (LLVA…ALVF), 587–607 (VPLY…IFLM), 627–647 (LTAT…TFAA), and 648–668 (LGVI…FGVL).

This sequence belongs to the resistance-nodulation-cell division (RND) (TC 2.A.6) family. MmpL subfamily.

The protein localises to the cell membrane. In Streptomyces coelicolor (strain ATCC BAA-471 / A3(2) / M145), this protein is Putative membrane protein SCO0839.